Consider the following 35-residue polypeptide: Delta-theraphotoxin-Hm1a (35 aa).

3 disulfide bridges follow: C2–C16, C9–C21, and C15–C28.

This sequence belongs to the neurotoxin 10 (Hwtx-1) family. 09 (HaTx) subfamily. As to expression, expressed by the venom gland.

The protein resides in the secreted. In terms of biological role, gating-modifier toxin that potently inhibits inactivation of the mammalian Nav1.1/SCN1A sodium channel (EC(50)=38 nM). Also moderately inhibits inactivation of Nav1.2/SCN2A (EC(50)=236 nM) and Nav1.3/SCN3A (EC(50)=220 nM) when the channels are expressed in oocytes without the beta-1 auxiliary subunit. Does not inhibit inactivation of Nav1.2/SCN2A when the channel is coexpressed with the beta-1 auxiliary subunit. When tested on Nav1.1/SCN1A channel, it enhances peak current amplitude and potently delays channel inactivation in a dose-dependent manner, leading to a large sustained current. It has no effect on the voltage-dependence of steady-state activation, and induces a depolarizing shift in the voltage dependence of inactivation. In addition, it does not modify the recovery from fast inactivation in Nav1.1/SCN1A. The binding affinity and subtype selectivity of the toxin towards Nav1.1/SCN1A channel is determined by residues within both the S1-S2 and S3-S4 loops of the domain IV voltage sensor of the channel. This toxin also weakly inhibits several subtypes of voltage-gated potassium channels. It moderately blocks Kv2.1/KCNB1 (23% inhibition at 100 nM), Kv2.2/KCNB2 (19.7% at 100 nM and 51% at 300 nM), Kv4.1/KCND1 (IC(50)=280 nM), Kv4.2/KCND2 (39% at 300 nM) and Kv4.3/KCND3 (43% at 300 nM). In vivo, intracerebroventricular injection into mice elicits convulsions, spasms, tremors and rapid death. When injected into mouse hindpaw, the toxin elicits an immediate and robust response to pain. However, intraplantar injection of toxin does not cause neurogenic inflammation or alter sensitivity to heat, indicative of a modality-specific effect on mechanosensitive neurons. In Dravet syndrome mice model, intracerebroventricular infusion of this peptide rescues mice from seizures and premature death. This is Delta-theraphotoxin-Hm1a from Heteroscodra maculata (Togo starburst tarantula).